The primary structure comprises 69 residues: UPF0337 protein ECA0631 (69 aa).

This sequence belongs to the UPF0337 (CsbD) family.

The sequence is that of UPF0337 protein ECA0631 from Pectobacterium atrosepticum (strain SCRI 1043 / ATCC BAA-672) (Erwinia carotovora subsp. atroseptica).